The sequence spans 385 residues: Probable thioesterase PNKD (385 aa).

A compositionally biased stretch (polar residues) spans 32 to 42 (KASQNRTRALQ). A disordered region spans residues 32–56 (KASQNRTRALQSHSSPECKEEPEPL). V121 bears the Phosphoserine mark. Zn(2+)-binding residues include H172, H174, D176, H177, H229, D253, and H291.

It belongs to the metallo-beta-lactamase superfamily. Glyoxalase II family. In terms of assembly, isoform 2 interacts with the sarcomeric proteins, MRLC2, MYOM1 and ENO3. The cofactor is Zn(2+). Post-translationally, undergoes cleavage at the N-terminus. In terms of tissue distribution, expressed in many discrete areas of the brain.

It localises to the cell membrane. It is found in the mitochondrion. Its subcellular location is the cytoplasm. The enzyme catalyses a thioester + H2O = a thiol + a carboxylate + H(+). Probable thioesterase that may play a role in cellular detoxification processes; it likely acts on a yet-unknown alpha-hydroxythioester substrate. In vitro, it is able to catalyze the hydrolysis of S-D-lactoyl-glutathione to form glutathione and D-lactic acid at very low rate, though this reaction is not physiologically relevant in vivo. The polypeptide is Probable thioesterase PNKD (Pnkd) (Mus musculus (Mouse)).